The sequence spans 357 residues: Uroporphyrinogen decarboxylase (357 aa).

Residues 27 to 31, Asp77, Tyr154, Ser209, and His330 contribute to the substrate site; that span reads RQAGR.

It belongs to the uroporphyrinogen decarboxylase family. In terms of assembly, homodimer.

Its subcellular location is the cytoplasm. The catalysed reaction is uroporphyrinogen III + 4 H(+) = coproporphyrinogen III + 4 CO2. It participates in porphyrin-containing compound metabolism; protoporphyrin-IX biosynthesis; coproporphyrinogen-III from 5-aminolevulinate: step 4/4. In terms of biological role, catalyzes the decarboxylation of four acetate groups of uroporphyrinogen-III to yield coproporphyrinogen-III. This is Uroporphyrinogen decarboxylase from Acinetobacter baumannii (strain AB0057).